Reading from the N-terminus, the 150-residue chain is Large ribosomal subunit protein bL9 (150 aa).

The protein belongs to the bacterial ribosomal protein bL9 family.

In terms of biological role, binds to the 23S rRNA. This is Large ribosomal subunit protein bL9 from Burkholderia mallei (strain NCTC 10247).